Here is a 511-residue protein sequence, read N- to C-terminus: Coiled-coil domain-containing protein 125 (511 aa).

Over residues 1-12 the composition is skewed to polar residues; sequence MSKVARSSSESD. The tract at residues 1 to 110 is disordered; it reads MSKVARSSSE…TVDSNSELSN (110 aa). The span at 43 to 54 shows a compositional bias: basic and acidic residues; the sequence is EFSHRSRKRSDG. Polar residues predominate over residues 83–108; it reads QDTFPQVSRISNYRRQSSTVDSNSEL. 2 coiled-coil regions span residues 105-243 and 293-325; these read NSEL…LEAL and RMAASTRKLLLQLKQELEILQKSKEEAYVMADA. S504 is modified (phosphoserine).

The protein localises to the cytoplasm. In terms of biological role, may be involved in the regulation of cell migration. In Homo sapiens (Human), this protein is Coiled-coil domain-containing protein 125 (CCDC125).